The chain runs to 341 residues: GTPase Obg (341 aa).

In terms of domain architecture, Obg spans 1 to 159; the sequence is MKFVDEALIK…RNLRLELRVL (159 aa). Residues 128 to 150 are disordered; sequence TRYKSSVNRSPRQTTPGSPGESR. The segment covering 129–144 has biased composition (polar residues); the sequence is RYKSSVNRSPRQTTPG. Positions 160–334 constitute an OBG-type G domain; the sequence is ADVGLLGLPN…LCYALMQLID (175 aa). GTP contacts are provided by residues 166–173, 191–195, 213–216, 283–286, and 315–317; these read GLPNAGKS, FTTLH, DIPG, NKID, and SAI. Mg(2+)-binding residues include serine 173 and threonine 193.

Belongs to the TRAFAC class OBG-HflX-like GTPase superfamily. OBG GTPase family. As to quaternary structure, monomer. Mg(2+) is required as a cofactor.

Its subcellular location is the cytoplasm. In terms of biological role, an essential GTPase which binds GTP, GDP and possibly (p)ppGpp with moderate affinity, with high nucleotide exchange rates and a fairly low GTP hydrolysis rate. Plays a role in control of the cell cycle, stress response, ribosome biogenesis and in those bacteria that undergo differentiation, in morphogenesis control. The polypeptide is GTPase Obg (Legionella pneumophila (strain Paris)).